The following is a 443-amino-acid chain: KH domain-containing, RNA-binding, signal transduction-associated protein 1 (443 aa).

The segment at 1–94 is disordered; that stretch reads MQRRDDPASR…PLLPPSATAA (94 aa). 2 positions are modified to phosphoserine: Ser18 and Ser20. An N6-acetyllysine modification is found at Lys21. A Phosphoserine modification is found at Ser29. Residue Thr33 is modified to Phosphothreonine. Asymmetric dimethylarginine; by PRMT1 is present on residues Arg45 and Arg52. Ser58 bears the Phosphoserine; by MAPK1 mark. The segment covering 61–72 has biased composition (pro residues); sequence TQPPPLLPPSTP. Residues Thr71 and Thr84 each carry the phosphothreonine; by MAPK1 modification. Over residues 81-94 the composition is skewed to low complexity; that stretch reads SAPTPLLPPSATAA. Residues Lys96 and Lys102 each participate in a glycyl lysine isopeptide (Lys-Gly) (interchain with G-Cter in SUMO2) cross-link. Positions 100 to 260 are involved in homodimerization; that stretch reads ENKYLPELMA…VKKFLVPDMM (161 aa). Ser113 carries the phosphoserine modification. Lys139 participates in a covalent cross-link: Glycyl lysine isopeptide (Lys-Gly) (interchain with G-Cter in SUMO2). Ser150 is modified (phosphoserine). Residues 171–197 form the KH domain; that stretch reads NFVGKILGPQGNTIKRLQEETGAKISV. Lys175 is modified (N6-acetyllysine; alternate). Lys175 participates in a covalent cross-link: Glycyl lysine isopeptide (Lys-Gly) (interchain with G-Cter in SUMO2); alternate. Residue Thr183 is modified to Phosphothreonine. Residues 280–317 are disordered; sequence PSRGRGVSVRGRGAAPPPPPVPRGRGVGPPRGALVRGT. 3 positions are modified to omega-N-methylarginine: Arg282, Arg284, and Arg291. Over residues 283–293 the composition is skewed to low complexity; sequence GRGVSVRGRGA. Arg304 carries the asymmetric dimethylarginine modification. Low complexity predominate over residues 307-316; sequence GPPRGALVRG. 2 positions are modified to omega-N-methylarginine; by PRMT1: Arg310 and Arg315. The residue at position 320 (Arg320) is a Dimethylated arginine; alternate. Arg320 carries the post-translational modification Omega-N-methylarginine; by PRMT1; alternate. An Omega-N-methylarginine; by PRMT1 modification is found at Arg325. Residues 326–345 are disordered; the sequence is GATVTRGVPPPPTVRGAPTP. 2 positions are modified to dimethylated arginine; alternate: Arg331 and Arg340. An omega-N-methylarginine; by PRMT1; alternate mark is found at Arg331 and Arg340. Arg331 carries the asymmetric dimethylarginine; alternate modification. The interaction with HNRNPA1 stretch occupies residues 351–443; sequence GIQRIPLPPT…AYREHPYGRY (93 aa). Tyr387 carries the phosphotyrosine modification. Position 390 is a phosphoserine (Ser390). An interaction with ZBTB7A region spans residues 400–420; that stretch reads GHGELQDSYEAYGQDDWNGTR. Residues 411–443 form a disordered region; that stretch reads YGQDDWNGTRPSLKAPPARPVKGAYREHPYGRY. Lys432 is covalently cross-linked (Glycyl lysine isopeptide (Lys-Gly) (interchain with G-Cter in SUMO2)). Residues 434-443 are compositionally biased toward basic and acidic residues; that stretch reads AYREHPYGRY. Residues Tyr435, Tyr440, and Tyr443 each carry the phosphotyrosine; by PTK6 modification.

It belongs to the KHDRBS family. As to quaternary structure, self-associates to form homooligomers when bound to RNA, oligomerization appears to be limited when binding to proteins. Forms a trimeric complex in the nucleus consisting of BANP, HDAC6 and KHDRBS1/SAM68; HDAC6 keeps KHDRBS1 in a deacetylated state which inhibits the inclusion of CD44 alternate exons. The complex is disrupted by MAPK1/MAPK3-mediated phosphorylation of BANP which results in BANP export to the cytoplasm. This facilitates acetylation of KHDRBS1 and CD44 variant exon inclusion. Interacts with KHDRBS3/SLIM-2 and KHDRBS2/SLIM-1; heterooligomer formation of KHDRBS family proteins may modulate RNA substrate specificity. Interacts with RASA1, FYN, GRB2, PLCG1, SRC, CBP and PRMT1. Interacts with PTK6 (via SH3 and SH2 domains). Forms a complex with ILF2, ILF3, YLPM1, RBMX, NCOA5 and PPP1CA. Binds WBP4/FBP21 (via WW domains), FNBP4/FBP30 (via WW domains). Interacts (via Arg/Gly-rich-flanked Pro-rich regions) with FYN (via the SH3 domain). Interacts with APC, HNRNPA1. Interacts with the non-receptor tyrosine kinase SRMS; the interaction leads to phosphorylation of KHDRBS1. Interacts with ZBTB7A; negatively regulates KHDRBS1 splicing activity toward BCL2L1. In terms of processing, tyrosine phosphorylated by several non-receptor tyrosine kinases including LCK, FYN and JAK3. Also tyrosine phosphorylated by the non-receptor tyrosine kinase SRMS in an EGF-dependent manner. Phosphorylation by PTK6 negatively regulates its RNA binding ability. Phosphorylation by PTK6 at Tyr-440 dictates the nuclear localization of KHDRBS1. Phosphorylation by MAPK1 at Ser-58, Thr-71 and Thr-84 regulates CD44 alternative splicing by promoting CD44 exon v5 inclusion. Acetylated. Positively correlates with ability to bind RNA. Deacetylated by HDAC6; this regulates alternative splicing by inhibiting the inclusion of CD44 alternate exons. Post-translationally, arginine methylation is required for nuclear localization. Inhibits interaction with Src-like SH3 domains, but not interaction with WW domains of WBP4/FBP21 and FNBP4/FBP30. In terms of tissue distribution, in adult cerebellum expressed in most neuronal cell populations, specifically in cerebellar granule cells of the internal granular layer, ROR(alpha)-positive Purkinje cells, internal granular layer and molecular layer interneurons (at protein level).

The protein resides in the nucleus. The protein localises to the cytoplasm. It localises to the membrane. Functionally, recruited and tyrosine phosphorylated by several receptor systems, for example the T-cell, leptin and insulin receptors. Once phosphorylated, functions as an adapter protein in signal transduction cascades by binding to SH2 and SH3 domain-containing proteins. Role in G2-M progression in the cell cycle. Represses CBP-dependent transcriptional activation apparently by competing with other nuclear factors for binding to CBP. Also acts as a putative regulator of mRNA stability and/or translation rates and mediates mRNA nuclear export. Positively regulates the association of constitutive transport element (CTE)-containing mRNA with large polyribosomes and translation initiation. May not be involved in the nucleocytoplasmic export of unspliced (CTE)-containing RNA species. RNA-binding protein that plays a role in the regulation of alternative splicing and influences mRNA splice site selection and exon inclusion. Binds to RNA containing 5'-[AU]UAA-3' as a bipartite motif spaced by more than 15 nucleotides. Binds poly(A). In cooperation with HNRNPA1 modulates alternative splicing of BCL2L1 by promoting splicing toward isoform Bcl-X(S), and of SMN1. Can regulate CD44 alternative splicing in a Ras pathway-dependent manner. Can regulate alternative splicing of NRXN1 and NRXN3 in the laminin G-like domain 6 containing the evolutionary conserved neurexin alternative spliced segment 4 (AS4) involved in neurexin selective targeting to postsynaptic partners. In a neuronal activity-dependent manner cooperates synergistically with KHDRBS2/SLIM-1 in regulation of NRXN1 exon skipping at AS4. The cooperation with KHDRBS2/SLIM-1 is antagonistic for regulation of NXRN3 alternative splicing at AS4. The sequence is that of KH domain-containing, RNA-binding, signal transduction-associated protein 1 from Mus musculus (Mouse).